The chain runs to 1151 residues: ATP-dependent RNA helicase ddx46 (1151 aa).

Composition is skewed to basic and acidic residues over residues 1–26 and 35–51; these read MDEYDKKRRLEHGGSDRSRSSNDNRN and YRDDRKDDRYYRDDRSH. Disordered stretches follow at residues 1 to 138, 166 to 224, 287 to 358, and 424 to 449; these read MDEY…SRFD, MYQQ…VFQQ, QELK…PLVN, and TSQMIDDDEKLEEESEGEDDGKDKTI. Positions 52-73 are enriched in low complexity; it reads YNNNNNNNNNNNNNNNNNNGNG. Positions 81-90 are enriched in polar residues; it reads SSQNKYQNHH. Composition is skewed to low complexity over residues 91 to 124, 166 to 199, 207 to 224, and 291 to 339; these read QQSPPQQQQQQQNSSYVPSQPPQQQTQTQQQPHI, MYQQPMYQQKQQQPQPPIFQQQQKQQQPPIFQHH, QPPVYQQQQQQQQPVFQQ, and ASGS…TTSP. The segment covering 428 to 443 has biased composition (acidic residues); sequence IDDDEKLEEESEGEDD. A Q motif motif is present at residues 509-537; sequence QSWAQAGLTEKVHLLLKKFQYEKPTSIQA. One can recognise a Helicase ATP-binding domain in the interval 540–718; the sequence is IPAIMNGRDL…KKILNKPLEI (179 aa). Residue 553–560 participates in ATP binding; it reads ARTGSGKT. The DEAD box signature appears at 666–669; it reads DEAD. The Helicase C-terminal domain maps to 729–890; sequence DIEQFVEVRP…KVPDELRKLN (162 aa). The interval 904 to 972 is disordered; that stretch reads LLAPTGFTGR…EKEKQLLSEK (69 aa). The segment covering 915-930 has biased composition (basic and acidic residues); it reads HKFDAAEEDKKNIERK. The segment covering 938-948 has biased composition (acidic residues); sequence IEEEEEEEDED. Basic and acidic residues predominate over residues 949–972; that stretch reads KEKAEKEKLAAASAEKEKQLLSEK.

The protein belongs to the DEAD box helicase family. DDX46/PRP5 subfamily. As to quaternary structure, component of the 17S U2 SnRNP complex, a ribonucleoprotein complex that contains small nuclear RNA (snRNA) U2 and a number of specific proteins.

It is found in the nucleus speckle. It carries out the reaction ATP + H2O = ADP + phosphate + H(+). In terms of biological role, component of the 17S U2 SnRNP complex of the spliceosome, a large ribonucleoprotein complex that removes introns from transcribed pre-mRNAs. In Dictyostelium discoideum (Social amoeba), this protein is ATP-dependent RNA helicase ddx46 (helB1).